The following is a 227-amino-acid chain: 2,3-bisphosphoglycerate-dependent phosphoglycerate mutase (227 aa).

Substrate is bound by residues 7-14 (RHGFSEWN), 20-21 (TG), R59, 86-89 (ERHY), K97, 113-114 (RR), and 182-183 (GN). H8 serves as the catalytic Tele-phosphohistidine intermediate. E86 serves as the catalytic Proton donor/acceptor.

It belongs to the phosphoglycerate mutase family. BPG-dependent PGAM subfamily. In terms of assembly, homodimer.

It catalyses the reaction (2R)-2-phosphoglycerate = (2R)-3-phosphoglycerate. Its pathway is carbohydrate degradation; glycolysis; pyruvate from D-glyceraldehyde 3-phosphate: step 3/5. In terms of biological role, catalyzes the interconversion of 2-phosphoglycerate and 3-phosphoglycerate. This Haemophilus influenzae (strain ATCC 51907 / DSM 11121 / KW20 / Rd) protein is 2,3-bisphosphoglycerate-dependent phosphoglycerate mutase.